Here is a 523-residue protein sequence, read N- to C-terminus: Probable lipid II flippase MurJ (523 aa).

12 consecutive transmembrane segments (helical) span residues 98-118 (AFYSLLLVFLGVLTLLGIVYV), 146-166 (IMFGFVFFVCTYAFYMGILNA), 170-190 (FGLPALAPALLNVSMLVFTFM), 201-221 (GLAWGVLIGGLLQALLLAVAL), 246-266 (MLPGLIGMGLLQFSTLVNLYF), 284-304 (LLELPLSLISVSIGAALLPTL), 328-348 (LFLAWPAALGLYILAEPIIEV), 360-380 (VQMTAAILRIYAVSLLLVSCS), 395-415 (VPMVLALVSLAVHVSLAPVLM), 422-442 (GLMISGVVAALINAVLLMGLL), 461-481 (FVLAGAGMVISLQAYELLMAQ), and 489-509 (LALFVTILLAVVAYFGLAYVL).

Belongs to the MurJ/MviN family.

It localises to the cell inner membrane. It participates in cell wall biogenesis; peptidoglycan biosynthesis. In terms of biological role, involved in peptidoglycan biosynthesis. Transports lipid-linked peptidoglycan precursors from the inner to the outer leaflet of the cytoplasmic membrane. The polypeptide is Probable lipid II flippase MurJ (Bdellovibrio bacteriovorus (strain ATCC 15356 / DSM 50701 / NCIMB 9529 / HD100)).